The primary structure comprises 58 residues: uncharacterized protein (58 aa).

Residues 3 to 52 are a coiled coil; the sequence is KVILEHLQRIEKQLEILNSKIENFLGFEELSEEELKELDEIEAKMEKGEK.

This is an uncharacterized protein from Archaeoglobus fulgidus (strain ATCC 49558 / DSM 4304 / JCM 9628 / NBRC 100126 / VC-16).